A 348-amino-acid chain; its full sequence is Holliday junction branch migration complex subunit RuvB (348 aa).

Residues 1–183 (MTDPSRLVTP…FGIPVRLNFY (183 aa)) form a large ATPase domain (RuvB-L) region. ATP-binding positions include L22, R23, G64, K67, T68, T69, 130 to 132 (EDF), R173, Y183, and R220. T68 contributes to the Mg(2+) binding site. The small ATPAse domain (RuvB-S) stretch occupies residues 184-254 (TIEELESIVS…IADHALGALE (71 aa)). The head domain (RuvB-H) stretch occupies residues 257-348 (AAGLDAMDRR…FGLFGGEEEA (92 aa)). DNA is bound by residues R293, R312, and R317.

It belongs to the RuvB family. As to quaternary structure, homohexamer. Forms an RuvA(8)-RuvB(12)-Holliday junction (HJ) complex. HJ DNA is sandwiched between 2 RuvA tetramers; dsDNA enters through RuvA and exits via RuvB. An RuvB hexamer assembles on each DNA strand where it exits the tetramer. Each RuvB hexamer is contacted by two RuvA subunits (via domain III) on 2 adjacent RuvB subunits; this complex drives branch migration. In the full resolvosome a probable DNA-RuvA(4)-RuvB(12)-RuvC(2) complex forms which resolves the HJ.

It is found in the cytoplasm. It catalyses the reaction ATP + H2O = ADP + phosphate + H(+). The RuvA-RuvB-RuvC complex processes Holliday junction (HJ) DNA during genetic recombination and DNA repair, while the RuvA-RuvB complex plays an important role in the rescue of blocked DNA replication forks via replication fork reversal (RFR). RuvA specifically binds to HJ cruciform DNA, conferring on it an open structure. The RuvB hexamer acts as an ATP-dependent pump, pulling dsDNA into and through the RuvAB complex. RuvB forms 2 homohexamers on either side of HJ DNA bound by 1 or 2 RuvA tetramers; 4 subunits per hexamer contact DNA at a time. Coordinated motions by a converter formed by DNA-disengaged RuvB subunits stimulates ATP hydrolysis and nucleotide exchange. Immobilization of the converter enables RuvB to convert the ATP-contained energy into a lever motion, pulling 2 nucleotides of DNA out of the RuvA tetramer per ATP hydrolyzed, thus driving DNA branch migration. The RuvB motors rotate together with the DNA substrate, which together with the progressing nucleotide cycle form the mechanistic basis for DNA recombination by continuous HJ branch migration. Branch migration allows RuvC to scan DNA until it finds its consensus sequence, where it cleaves and resolves cruciform DNA. The polypeptide is Holliday junction branch migration complex subunit RuvB (Rhodopseudomonas palustris (strain HaA2)).